Consider the following 266-residue polypeptide: Glutamate racemase (266 aa).

Substrate is bound by residues 9–10 (DS) and 41–42 (YG). Cysteine 73 functions as the Proton donor/acceptor in the catalytic mechanism. 74 to 75 (NS) serves as a coordination point for substrate. The active-site Proton donor/acceptor is cysteine 183. 184–185 (TH) is a substrate binding site.

The protein belongs to the aspartate/glutamate racemases family.

It catalyses the reaction L-glutamate = D-glutamate. Its pathway is cell wall biogenesis; peptidoglycan biosynthesis. In terms of biological role, provides the (R)-glutamate required for cell wall biosynthesis. This is Glutamate racemase from Shewanella loihica (strain ATCC BAA-1088 / PV-4).